The primary structure comprises 418 residues: Histidine--tRNA ligase (418 aa).

It belongs to the class-II aminoacyl-tRNA synthetase family.

The protein localises to the cytoplasm. The enzyme catalyses tRNA(His) + L-histidine + ATP = L-histidyl-tRNA(His) + AMP + diphosphate + H(+). The chain is Histidine--tRNA ligase from Methanococcus vannielii (strain ATCC 35089 / DSM 1224 / JCM 13029 / OCM 148 / SB).